The chain runs to 20 residues: Cytochrome c oxidase subunit 8B, mitochondrial (20 aa).

The disordered stretch occupies residues 1–20 (LSGKPAKXHLSVGEQAIAMT).

This sequence belongs to the cytochrome c oxidase VIII family. As to quaternary structure, component of the cytochrome c oxidase (complex IV, CIV), a multisubunit enzyme composed of 14 subunits. The complex is composed of a catalytic core of 3 subunits MT-CO1, MT-CO2 and MT-CO3, encoded in the mitochondrial DNA, and 11 supernumerary subunits COX4I, COX5A, COX5B, COX6A, COX6B, COX6C, COX7A, COX7B, COX7C, COX8 and NDUFA4, which are encoded in the nuclear genome. The complex exists as a monomer or a dimer and forms supercomplexes (SCs) in the inner mitochondrial membrane with NADH-ubiquinone oxidoreductase (complex I, CI) and ubiquinol-cytochrome c oxidoreductase (cytochrome b-c1 complex, complex III, CIII), resulting in different assemblies (supercomplex SCI(1)III(2)IV(1) and megacomplex MCI(2)III(2)IV(2)).

It localises to the mitochondrion inner membrane. It functions in the pathway energy metabolism; oxidative phosphorylation. Functionally, component of the cytochrome c oxidase, the last enzyme in the mitochondrial electron transport chain which drives oxidative phosphorylation. The respiratory chain contains 3 multisubunit complexes succinate dehydrogenase (complex II, CII), ubiquinol-cytochrome c oxidoreductase (cytochrome b-c1 complex, complex III, CIII) and cytochrome c oxidase (complex IV, CIV), that cooperate to transfer electrons derived from NADH and succinate to molecular oxygen, creating an electrochemical gradient over the inner membrane that drives transmembrane transport and the ATP synthase. Cytochrome c oxidase is the component of the respiratory chain that catalyzes the reduction of oxygen to water. Electrons originating from reduced cytochrome c in the intermembrane space (IMS) are transferred via the dinuclear copper A center (CU(A)) of subunit 2 and heme A of subunit 1 to the active site in subunit 1, a binuclear center (BNC) formed by heme A3 and copper B (CU(B)). The BNC reduces molecular oxygen to 2 water molecules using 4 electrons from cytochrome c in the IMS and 4 protons from the mitochondrial matrix. The protein is Cytochrome c oxidase subunit 8B, mitochondrial of Oncorhynchus mykiss (Rainbow trout).